The sequence spans 484 residues: tRNA sulfurtransferase (484 aa).

Positions 63-167 (ERLVEALKCI…NKDLFIVTQR (105 aa)) constitute a THUMP domain. Residues 185-186 (LM), K267, G289, and Q298 each bind ATP. A disulfide bond links C346 and C458. Residues 406–484 (IPENAVVVDI…GFKNVKVYRP (79 aa)) enclose the Rhodanese domain. Catalysis depends on C458, which acts as the Cysteine persulfide intermediate.

Belongs to the ThiI family.

Its subcellular location is the cytoplasm. The enzyme catalyses [ThiI sulfur-carrier protein]-S-sulfanyl-L-cysteine + a uridine in tRNA + 2 reduced [2Fe-2S]-[ferredoxin] + ATP + H(+) = [ThiI sulfur-carrier protein]-L-cysteine + a 4-thiouridine in tRNA + 2 oxidized [2Fe-2S]-[ferredoxin] + AMP + diphosphate. The catalysed reaction is [ThiS sulfur-carrier protein]-C-terminal Gly-Gly-AMP + S-sulfanyl-L-cysteinyl-[cysteine desulfurase] + AH2 = [ThiS sulfur-carrier protein]-C-terminal-Gly-aminoethanethioate + L-cysteinyl-[cysteine desulfurase] + A + AMP + 2 H(+). It functions in the pathway cofactor biosynthesis; thiamine diphosphate biosynthesis. In terms of biological role, catalyzes the ATP-dependent transfer of a sulfur to tRNA to produce 4-thiouridine in position 8 of tRNAs, which functions as a near-UV photosensor. Also catalyzes the transfer of sulfur to the sulfur carrier protein ThiS, forming ThiS-thiocarboxylate. This is a step in the synthesis of thiazole, in the thiamine biosynthesis pathway. The sulfur is donated as persulfide by IscS. The protein is tRNA sulfurtransferase of Colwellia psychrerythraea (strain 34H / ATCC BAA-681) (Vibrio psychroerythus).